A 441-amino-acid polypeptide reads, in one-letter code: Rho-associated protein kinase 1 (441 aa).

Positions 1-99 (NSKSQMDKDY…RLEQEVNEHK (99 aa)) form a coiled coil. Positions 114 to 353 (EAKSVAMCEM…TLSRLEETNS (240 aa)) are SHROOM3 binding. The 67-residue stretch at 356 to 422 (TKDIELLRKE…LAEIMNRKDF (67 aa)) folds into the RhoBD domain. Positions 418–441 (NRKDFKIDRKKANTQDLRKKKKKK) form a coiled coil.

It belongs to the protein kinase superfamily. AGC Ser/Thr protein kinase family. As to quaternary structure, homodimer. Interacts with RHOA (activated by GTP), RHOB, RHOC, GEM, MYLC2B, RHOE, PPP1R12A, LIMK1, LIMK2, TSG101, CHORDC1, DAPK3, PFN1, PTEN and JIP3. Interacts with FHOD1 in a Src-dependent manner. Interacts with ITGB1BP1 (via N-terminus and PTB domain). Interacts with SHROOM3. Requires Mg(2+) as cofactor.

It is found in the cytoplasm. Its subcellular location is the golgi apparatus membrane. The protein localises to the cytoskeleton. It localises to the microtubule organizing center. The protein resides in the centrosome. It is found in the centriole. Its subcellular location is the cell projection. The protein localises to the bleb. It localises to the cell membrane. The protein resides in the lamellipodium. It is found in the ruffle. It catalyses the reaction L-seryl-[protein] + ATP = O-phospho-L-seryl-[protein] + ADP + H(+). The enzyme catalyses L-threonyl-[protein] + ATP = O-phospho-L-threonyl-[protein] + ADP + H(+). Activated by RHOA binding. Inhibited by Y-27632. In terms of biological role, protein kinase which is a key regulator of the actin cytoskeleton and cell polarity. Involved in regulation of smooth muscle contraction, actin cytoskeleton organization, stress fiber and focal adhesion formation, neurite retraction, cell adhesion and motility via phosphorylation of DAPK3, GFAP, LIMK1, LIMK2, MYL9/MLC2, TPPP, PFN1 and PPP1R12A. Phosphorylates FHOD1 and acts synergistically with it to promote SRC-dependent non-apoptotic plasma membrane blebbing. Phosphorylates JIP3 and regulates the recruitment of JNK to JIP3 upon UVB-induced stress. Acts as a suppressor of inflammatory cell migration by regulating PTEN phosphorylation and stability. Acts as a negative regulator of VEGF-induced angiogenic endothelial cell activation. Required for centrosome positioning and centrosome-dependent exit from mitosis. Plays a role in terminal erythroid differentiation. Inhibits podocyte motility via regulation of actin cytoskeletal dynamics and phosphorylation of CFL1. Promotes keratinocyte terminal differentiation. Involved in osteoblast compaction through the fibronectin fibrillogenesis cell-mediated matrix assembly process, essential for osteoblast mineralization. May regulate closure of the eyelids and ventral body wall by inducing the assembly of actomyosin bundles. The polypeptide is Rho-associated protein kinase 1 (ROCK1) (Bos taurus (Bovine)).